Reading from the N-terminus, the 318-residue chain is Protein FAM228A (318 aa).

The interval 259–297 (SQESKRHEKKGLALGTGQHRPRSWAAGEGQQRRRSQPVD) is disordered.

Belongs to the FAM228 family.

The sequence is that of Protein FAM228A (FAM228A) from Bos taurus (Bovine).